Reading from the N-terminus, the 720-residue chain is Phosphoribosylformylglycinamidine synthase subunit PurL (720 aa).

Residue H47 is part of the active site. ATP contacts are provided by Y50 and K89. E91 lines the Mg(2+) pocket. Substrate contacts are provided by residues 92–95 (SHNH) and R114. Residue H93 is the Proton acceptor of the active site. D115 contributes to the Mg(2+) binding site. Q238 serves as a coordination point for substrate. D266 contributes to the Mg(2+) binding site. 310 to 312 (ESQ) contacts substrate. ATP is bound by residues D488 and G525. N526 is a binding site for Mg(2+). S528 is a substrate binding site.

The protein belongs to the FGAMS family. As to quaternary structure, monomer. Part of the FGAM synthase complex composed of 1 PurL, 1 PurQ and 2 PurS subunits.

Its subcellular location is the cytoplasm. The catalysed reaction is N(2)-formyl-N(1)-(5-phospho-beta-D-ribosyl)glycinamide + L-glutamine + ATP + H2O = 2-formamido-N(1)-(5-O-phospho-beta-D-ribosyl)acetamidine + L-glutamate + ADP + phosphate + H(+). It participates in purine metabolism; IMP biosynthesis via de novo pathway; 5-amino-1-(5-phospho-D-ribosyl)imidazole from N(2)-formyl-N(1)-(5-phospho-D-ribosyl)glycinamide: step 1/2. Its function is as follows. Part of the phosphoribosylformylglycinamidine synthase complex involved in the purines biosynthetic pathway. Catalyzes the ATP-dependent conversion of formylglycinamide ribonucleotide (FGAR) and glutamine to yield formylglycinamidine ribonucleotide (FGAM) and glutamate. The FGAM synthase complex is composed of three subunits. PurQ produces an ammonia molecule by converting glutamine to glutamate. PurL transfers the ammonia molecule to FGAR to form FGAM in an ATP-dependent manner. PurS interacts with PurQ and PurL and is thought to assist in the transfer of the ammonia molecule from PurQ to PurL. This chain is Phosphoribosylformylglycinamidine synthase subunit PurL, found in Cereibacter sphaeroides (strain KD131 / KCTC 12085) (Rhodobacter sphaeroides).